The chain runs to 427 residues: Isoprenylcysteine alpha-carbonyl methylesterase ICME (427 aa).

A disordered region spans residues 26-59; the sequence is EVLPDEDSDRTTLLNGEPLRRRVSGKSPVDEGPR. A run of 2 helical transmembrane segments spans residues 102–122 and 157–177; these read LLAL…VAYS and VVVF…GSLL. Residues 163–165 and 234–236 each bind substrate; these read GGA and QSA. Residues S235, D336, and H368 contribute to the active site.

It belongs to the AB hydrolase superfamily. Isoprenylcysteine methylesterase family. As to expression, expressed in roots, rosette and cauline leaves, stems, flowers and siliques.

It localises to the endoplasmic reticulum membrane. It is found in the golgi apparatus membrane. It carries out the reaction [protein]-C-terminal S-[(2E,6E)-farnesyl]-L-cysteine methyl ester + H2O = [protein]-C-terminal S-[(2E,6E)-farnesyl]-L-cysteine + methanol + H(+). Its function is as follows. Catalyzes the demethylation of isoprenylcysteine methylesters. In vitro, is specific for N-acetyl-S-farnesyl-L-cysteine methyl ester (AFCme) and has low activity toward N-acetyl-S-geranyl-L-cysteine methyl ester (AGCme). Acts as a positive regulator of ABA signaling. May be involved in the demethylation and inactivation of isoprenylated negative regulators of abscisic acid (ABA) signaling. Carboxyl methylation is a reversible and potentially regulated step in the post-translational modification of prenylated proteins. In Arabidopsis thaliana (Mouse-ear cress), this protein is Isoprenylcysteine alpha-carbonyl methylesterase ICME.